A 120-amino-acid chain; its full sequence is MPVYVDYDVPADLQERALESLEVARDTGSVKKGTNETTKAIERGNADIVFVAEDVSPEEIVMHLPELAAEKGIEVVFVETQDELGNAAGLEVGSAAAAVVAAGDAEDEIEDISTKVEDLQ.

The protein belongs to the eukaryotic ribosomal protein eL8 family. In terms of assembly, part of the 50S ribosomal subunit. Probably part of the RNase P complex.

The protein resides in the cytoplasm. Multifunctional RNA-binding protein that recognizes the K-turn motif in ribosomal RNA, the RNA component of RNase P, box H/ACA, box C/D and box C'/D' sRNAs. The chain is Large ribosomal subunit protein eL8 from Halobacterium salinarum (strain ATCC 29341 / DSM 671 / R1).